The primary structure comprises 698 residues: Ion-translocating oxidoreductase complex subunit C (698 aa).

4Fe-4S ferredoxin-type domains follow at residues 366-397 (TEMG…QQLY) and 407-436 (KARN…VQYY). [4Fe-4S] cluster contacts are provided by Cys-377, Cys-380, Cys-383, Cys-387, Cys-416, Cys-419, Cys-422, and Cys-426.

This sequence belongs to the 4Fe4S bacterial-type ferredoxin family. RnfC subfamily. The complex is composed of six subunits: RnfA, RnfB, RnfC, RnfD, RnfE and RnfG. The cofactor is [4Fe-4S] cluster.

It is found in the cell inner membrane. Functionally, part of a membrane-bound complex that couples electron transfer with translocation of ions across the membrane. The sequence is that of Ion-translocating oxidoreductase complex subunit C from Yersinia pseudotuberculosis serotype O:3 (strain YPIII).